The primary structure comprises 206 residues: Large ribosomal subunit protein uL4 (206 aa).

The interval 47–77 (GTHDTKTRGEVSGGGRKPWRQKGTGRARHGS) is disordered. Basic residues predominate over residues 63 to 77 (KPWRQKGTGRARHGS).

Belongs to the universal ribosomal protein uL4 family. In terms of assembly, part of the 50S ribosomal subunit.

Functionally, one of the primary rRNA binding proteins, this protein initially binds near the 5'-end of the 23S rRNA. It is important during the early stages of 50S assembly. It makes multiple contacts with different domains of the 23S rRNA in the assembled 50S subunit and ribosome. Forms part of the polypeptide exit tunnel. This is Large ribosomal subunit protein uL4 from Carboxydothermus hydrogenoformans (strain ATCC BAA-161 / DSM 6008 / Z-2901).